A 69-amino-acid polypeptide reads, in one-letter code: uncharacterized protein (69 aa).

This is an uncharacterized protein from Escherichia coli O157:H7.